A 143-amino-acid chain; its full sequence is Antiholin-like protein LrgA (143 aa).

4 helical membrane passes run 6–26 (VYSFLSQAFIFSAIMLISNII), 30–50 (LPIPMPSSVIGLVILFSLLCL), 61–81 (LGTALTGIIGFLFVPSGISVI), and 97–117 (VIVVATVILLAVTGLFAQFIL).

Belongs to the CidA/LrgA family. LrgA subfamily.

It is found in the cell membrane. In terms of biological role, inhibits the expression or activity of extracellular murein hydrolases by interacting, possibly with LrgB, with the holin-like protein CidA. The LrgAB and CidA proteins may affect the proton motive force of the membrane. May be involved in programmed cell death (PCD), possibly triggering PCD in response to antibiotics and environmental stresses. The protein is Antiholin-like protein LrgA of Bacillus anthracis (strain A0248).